A 238-amino-acid polypeptide reads, in one-letter code: Probable transcriptional regulatory protein SPH_2064 (238 aa).

The protein belongs to the TACO1 family. YeeN subfamily.

It localises to the cytoplasm. The chain is Probable transcriptional regulatory protein SPH_2064 from Streptococcus pneumoniae (strain Hungary19A-6).